The following is a 233-amino-acid chain: Putative quercetin 2,3-dioxygenase PM1685 (233 aa).

Positions 59, 61, 103, and 105 each coordinate a divalent metal cation.

This sequence belongs to the pirin family. It depends on a divalent metal cation as a cofactor.

It catalyses the reaction quercetin + O2 = 2-(3,4-dihydroxybenzoyloxy)-4,6-dihydroxybenzoate + CO. The protein operates within flavonoid metabolism; quercetin degradation. In terms of biological role, putative quercetin 2,3-dioxygenase. This is Putative quercetin 2,3-dioxygenase PM1685 from Pasteurella multocida (strain Pm70).